Consider the following 231-residue polypeptide: 7-cyano-7-deazaguanine synthase (231 aa).

8 to 18 (FSGGQDSTTCL) serves as a coordination point for ATP. Zn(2+) contacts are provided by cysteine 188, cysteine 197, cysteine 200, and cysteine 203.

Belongs to the QueC family. The cofactor is Zn(2+).

The enzyme catalyses 7-carboxy-7-deazaguanine + NH4(+) + ATP = 7-cyano-7-deazaguanine + ADP + phosphate + H2O + H(+). It functions in the pathway purine metabolism; 7-cyano-7-deazaguanine biosynthesis. In terms of biological role, catalyzes the ATP-dependent conversion of 7-carboxy-7-deazaguanine (CDG) to 7-cyano-7-deazaguanine (preQ(0)). The polypeptide is 7-cyano-7-deazaguanine synthase (Escherichia coli (strain SMS-3-5 / SECEC)).